A 561-amino-acid chain; its full sequence is Transmembrane protein 209 (561 aa).

Phosphoserine is present on serine 11. The helical transmembrane segment at 28–48 threads the bilayer; that stretch reads VVLAWGLLNVSMAGMIYTEMT. N-linked (GlcNAc...) asparagine glycosylation occurs at asparagine 57. Residues 60-80 traverse the membrane as a helical segment; it reads YWPLWYIELALASLFSLNALF. Serine 98 is subject to Phosphoserine. Disordered stretches follow at residues 120–156 and 200–232; these read LAAT…KFAT and SSPY…PTDK. Over residues 138–152 the composition is skewed to low complexity; the sequence is SVLSYSPSRSPSTSP. Phosphoserine is present on residues serine 201 and serine 248. The interval 250–270 is disordered; sequence EEKQHRVKLGSPDSTSPSTSP. Low complexity predominate over residues 260–270; sequence SPDSTSPSTSP. N-linked (GlcNAc...) asparagine glycosylation occurs at asparagine 274. Serine 278 is subject to Phosphoserine.

Interacts with NUP205.

The protein localises to the membrane. The protein resides in the nucleus envelope. Its subcellular location is the golgi apparatus. It is found in the cytoplasm. Nuclear envelope protein which in association with NUP205, may be involved in nuclear transport of various nuclear proteins in addition to MYC. The chain is Transmembrane protein 209 (Tmem209) from Mus musculus (Mouse).